The following is a 501-amino-acid chain: MAMRGFTLFSILVLSLCASSIRSEETETKEFVLTLDHTNFTDTINKHDFIVVEFYAPWCGHCKQLAPEYEKAASALSSNVPPVVLAKIDASEETNREFATQYEVQGFPTIKIFRNGGKAVQEYNGPREAEGIVTYLKKQSGPASAEIKSADDASEVVSDKKVVVVGIFPKLSGSEFDSFMAIAEKLRSELDFAHTSDAKLLPRGESSVTGPVVRLFKPFDEQFVDSKDFDGEALEKFVKESSIPLITVFDKDPNNHPYVIKFFESTNTKAMLFINFTGEGAESLKSKYREVATSNKGQGLSFLLGDAENSQGAFQYFGLEESQVPLIIIQTADDKKYLKTNVEVDQIESWVKDFKDGKIAPHKKSQPIPAENNEPVKVVVSDSLDDIVLNSGKNVLLEFYAPWCGHCQKLAPILDEVAVSYQSDSSVVIAKLDATANDFPKDTFDVKGFPTIYFKSASGNVVVYEGDRTKEDFISFVDKNKDTVGEPKKEEETTEEVKDEL.

The N-terminal stretch at 1–23 is a signal peptide; sequence MAMRGFTLFSILVLSLCASSIRS. The region spanning 24 to 141 is the Thioredoxin 1 domain; that stretch reads EETETKEFVL…IVTYLKKQSG (118 aa). The N-linked (GlcNAc...) asparagine glycan is linked to N39. Catalysis depends on nucleophile residues C59 and C62. C59 and C62 are disulfide-bonded. Residue N275 is glycosylated (N-linked (GlcNAc...) asparagine). A Thioredoxin 2 domain is found at 354–482; it reads FKDGKIAPHK…FISFVDKNKD (129 aa). Catalysis depends on nucleophile residues C404 and C407. A disulfide bridge links C404 with C407. A Prevents secretion from ER motif is present at residues 498 to 501; it reads KDEL.

This sequence belongs to the protein disulfide isomerase family. Interacts with RD21A, At3g19390, At5g43060. As to expression, highly expressed in flowers, stems and immature seeds, and at lower levels in leaves and siliques (at protein level).

The protein localises to the endoplasmic reticulum lumen. Its subcellular location is the vacuole. It catalyses the reaction Catalyzes the rearrangement of -S-S- bonds in proteins.. Its function is as follows. Protein disulfide isomerase that associates with RD21A protease for trafficking from the ER through the Golgi to lytic and protein storage vacuoles of endothelial cells in developing seeds. Regulates the timing of programmed cell death (PCD) of the endothelial cells by chaperoning and inhibiting cysteine proteases during their trafficking to vacuoles. The protein is Protein disulfide isomerase-like 1-1 (PDIL1-1) of Arabidopsis thaliana (Mouse-ear cress).